The chain runs to 196 residues: DnaA initiator-associating protein DiaA (196 aa).

The region spanning 34–196 (LVQSLLNGNK…DNTLFPHQDD (163 aa)) is the SIS domain.

It belongs to the SIS family. DiaA subfamily. As to quaternary structure, homotetramer; dimer of dimers.

In terms of biological role, required for the timely initiation of chromosomal replication via direct interactions with the DnaA initiator protein. This chain is DnaA initiator-associating protein DiaA, found in Cronobacter sakazakii (strain ATCC BAA-894) (Enterobacter sakazakii).